A 410-amino-acid polypeptide reads, in one-letter code: Enterobactin exporter EntS (410 aa).

Topologically, residues Met-1–Ala-21 are cytoplasmic. Residues Val-22 to Val-42 traverse the membrane as a helical segment. Topologically, residues Gln-43–Gly-55 are periplasmic. The helical transmembrane segment at Leu-56–Ala-76 threads the bilayer. Residues Asp-77 to Lys-83 are Cytoplasmic-facing. Residues Val-84–Leu-104 form a helical membrane-spanning segment. Residues Leu-105–Ser-109 are Periplasmic-facing. Residues Leu-110 to Ala-130 traverse the membrane as a helical segment. Residues Leu-131–Arg-156 are Cytoplasmic-facing. Residues Leu-157–Trp-177 traverse the membrane as a helical segment. Residue Asn-178 is a topological domain, periplasmic. The helical transmembrane segment at Tyr-179 to Leu-199 threads the bilayer. The Cytoplasmic segment spans residues Pro-200 to Arg-218. The chain crosses the membrane as a helical span at residues Phe-219–Ala-233. Topologically, residues Ser-234 to Ser-250 are periplasmic. Residues Ala-251–Thr-271 form a helical membrane-spanning segment. At Ser-272 to Pro-281 the chain is on the cytoplasmic side. The chain crosses the membrane as a helical span at residues Gly-282–Leu-301. At Met-302 to Leu-307 the chain is on the periplasmic side. Residues Gly-308 to Leu-330 form a helical membrane-spanning segment. The Cytoplasmic portion of the chain corresponds to Gln-331–Asn-350. The helical transmembrane segment at Val-351–Val-371 threads the bilayer. A topological domain (periplasmic) is located at residue Ala-372. The helical transmembrane segment at Ser-373–Val-393 threads the bilayer. Residues Glu-394 to Ser-410 are Cytoplasmic-facing.

It belongs to the major facilitator superfamily. EntS (TC 2.A.1.38) family.

Its subcellular location is the cell inner membrane. In terms of biological role, component of an export pathway for enterobactin. The protein is Enterobactin exporter EntS of Shigella flexneri.